A 1370-amino-acid chain; its full sequence is DNA-directed RNA polymerase subunit beta (1370 aa).

The protein belongs to the RNA polymerase beta chain family. As to quaternary structure, the RNAP catalytic core consists of 2 alpha, 1 beta, 1 beta' and 1 omega subunit. When a sigma factor is associated with the core the holoenzyme is formed, which can initiate transcription.

The catalysed reaction is RNA(n) + a ribonucleoside 5'-triphosphate = RNA(n+1) + diphosphate. DNA-dependent RNA polymerase catalyzes the transcription of DNA into RNA using the four ribonucleoside triphosphates as substrates. The chain is DNA-directed RNA polymerase subunit beta from Syntrophobacter fumaroxidans (strain DSM 10017 / MPOB).